The chain runs to 295 residues: Pyridoxal 5'-phosphate synthase subunit PdxS (295 aa).

Aspartate 25 serves as a coordination point for D-ribose 5-phosphate. The active-site Schiff-base intermediate with D-ribose 5-phosphate is the lysine 82. Glycine 154 lines the D-ribose 5-phosphate pocket. Residue arginine 166 participates in D-glyceraldehyde 3-phosphate binding. D-ribose 5-phosphate contacts are provided by residues glycine 215 and 236-237 (GS).

Belongs to the PdxS/SNZ family. In terms of assembly, in the presence of PdxT, forms a dodecamer of heterodimers.

The enzyme catalyses aldehydo-D-ribose 5-phosphate + D-glyceraldehyde 3-phosphate + L-glutamine = pyridoxal 5'-phosphate + L-glutamate + phosphate + 3 H2O + H(+). It functions in the pathway cofactor biosynthesis; pyridoxal 5'-phosphate biosynthesis. Functionally, catalyzes the formation of pyridoxal 5'-phosphate from ribose 5-phosphate (RBP), glyceraldehyde 3-phosphate (G3P) and ammonia. The ammonia is provided by the PdxT subunit. Can also use ribulose 5-phosphate and dihydroxyacetone phosphate as substrates, resulting from enzyme-catalyzed isomerization of RBP and G3P, respectively. This chain is Pyridoxal 5'-phosphate synthase subunit PdxS, found in Bacillus cytotoxicus (strain DSM 22905 / CIP 110041 / 391-98 / NVH 391-98).